Consider the following 438-residue polypeptide: sn-glycerol-3-phosphate-binding periplasmic protein UgpB (438 aa).

A signal peptide spans 1-23 (MKPLHYTASALALGLALMGNAQA). Residues Tyr65, Glu89, Ser144, Ser270, Gly307, Tyr346, and Arg397 each coordinate sn-glycerol 3-phosphate.

It belongs to the bacterial solute-binding protein 1 family. In terms of assembly, the complex is composed of two ATP-binding proteins (UgpC), two transmembrane proteins (UgpA and UgpE) and a solute-binding protein (UgpB).

The protein localises to the periplasm. Functionally, part of the ABC transporter complex UgpBAEC involved in sn-glycerol-3-phosphate (G3P) import. Binds G3P. The sequence is that of sn-glycerol-3-phosphate-binding periplasmic protein UgpB (ugpB) from Escherichia coli O157:H7.